The chain runs to 162 residues: Regulator of ribonuclease activity A (162 aa).

This sequence belongs to the RraA family. As to quaternary structure, homotrimer. Binds to both RNA-binding sites in the C-terminal region of Rne and to RhlB.

The protein resides in the cytoplasm. In terms of biological role, globally modulates RNA abundance by binding to RNase E (Rne) and regulating its endonucleolytic activity. Can modulate Rne action in a substrate-dependent manner by altering the composition of the degradosome. Modulates RNA-binding and helicase activities of the degradosome. The protein is Regulator of ribonuclease activity A of Haemophilus influenzae (strain ATCC 51907 / DSM 11121 / KW20 / Rd).